The sequence spans 700 residues: Auxin response factor 18 (700 aa).

The segment at residues 128–230 is a DNA-binding region (TF-B3); it reads FAKTLTQSDA…DLCVGIRRAK (103 aa). Disordered stretches follow at residues 234-254 and 560-595; these read VGGP…AAGG and VKKS…DNLS. A compositionally biased stretch (pro residues) spans 239-250; the sequence is FLPPPPPPPPTP. The segment covering 565–594 has biased composition (polar residues); sequence SDGNAENTVNKSNSDVSSPRSNQNGTTDNL. One can recognise a PB1 domain in the interval 614-697; the sequence is TGHCKVFMQS…NILTDTSGDN (84 aa).

The protein belongs to the ARF family. Homodimers and heterodimers. Expressed in roots, culms, leaves and young panicles.

The protein localises to the nucleus. Auxin response factors (ARFs) are transcriptional factors that bind specifically to the DNA sequence 5'-TGTCTC-3' found in the auxin-responsive promoter elements (AuxREs). The polypeptide is Auxin response factor 18 (ARF18) (Oryza sativa subsp. japonica (Rice)).